Consider the following 453-residue polypeptide: Nuclear distribution protein PAC1-2 (453 aa).

The 33-residue stretch at glutamine 9–glutamate 41 folds into the LisH domain. Residues valine 63–serine 87 are a coiled coil. The disordered stretch occupies residues leucine 84–arginine 108. 7 WD repeats span residues serine 113 to lysine 154, histidine 156 to arginine 196, glycine 200 to threonine 243, glycine 246 to lysine 285, glycine 290 to leucine 350, glycine 352 to lysine 391, and alanine 396 to valine 448.

It belongs to the WD repeat LIS1/nudF family. As to quaternary structure, self-associates. Interacts with NDL1 and dynein.

It localises to the cytoplasm. It is found in the cytoskeleton. The protein resides in the spindle pole. Positively regulates the activity of the minus-end directed microtubule motor protein dynein. May enhance dynein-mediated microtubule sliding by targeting dynein to the microtubule plus end. Required for nuclear migration during vegetative growth as well as development. Required for retrograde early endosome (EE) transport from the hyphal tip. Required for localization of dynein to the mitotic spindle poles. Recruits additional proteins to the dynein complex at SPBs. This Chaetomium globosum (strain ATCC 6205 / CBS 148.51 / DSM 1962 / NBRC 6347 / NRRL 1970) (Soil fungus) protein is Nuclear distribution protein PAC1-2.